The following is a 130-amino-acid chain: Con-Ins G2b (130 aa).

A signal peptide spans 1–23 (MTTSSYFLLVALGLLLYVRQSFS). Disulfide bonds link C29/C100, C41/C103, C53/C116, and C102/C107. Position 34 is a 4-hydroxyproline; partial (P34). The interval 54–77 (EEEEARRGGTNDGGKKRRRASPLR) is disordered. Residues 59–92 (RRGGTNDGGKKRRRASPLRKRRRFISMLKARAKR) constitute a propeptide, c peptide. The span at 68 to 77 (KKRRRASPLR) shows a compositional bias: basic residues. Residue E111 is modified to 4-carboxyglutamate; partial.

It belongs to the insulin family. Heterodimer of A and B chains; disulfide-linked. In terms of tissue distribution, expressed by the venom gland.

Its subcellular location is the secreted. In terms of biological role, this venom insulin, from a fish-hunting cone snail, facilitates prey capture by rapidly inducing hypoglycemic shock. Intraperitoneal injection of this peptide into zebrafish lowers blood glucose with the same potency than human insulin. In vivo, when applied to water, this peptide reduces overall locomotor activity of zebrafish larvae, observed as a significant decrease in the percentage of time spent swimming and movement frequency. The protein is Con-Ins G2b of Conus geographus (Geography cone).